Here is a 359-residue protein sequence, read N- to C-terminus: Chorismate synthase (359 aa).

Arg47 contacts NADP(+). FMN-binding positions include 123–125 (RSS), Gly283, 298–302 (KPTSS), and Arg326.

It belongs to the chorismate synthase family. Homotetramer. FMNH2 is required as a cofactor.

The enzyme catalyses 5-O-(1-carboxyvinyl)-3-phosphoshikimate = chorismate + phosphate. It functions in the pathway metabolic intermediate biosynthesis; chorismate biosynthesis; chorismate from D-erythrose 4-phosphate and phosphoenolpyruvate: step 7/7. Functionally, catalyzes the anti-1,4-elimination of the C-3 phosphate and the C-6 proR hydrogen from 5-enolpyruvylshikimate-3-phosphate (EPSP) to yield chorismate, which is the branch point compound that serves as the starting substrate for the three terminal pathways of aromatic amino acid biosynthesis. This reaction introduces a second double bond into the aromatic ring system. This chain is Chorismate synthase, found in Chlamydia pneumoniae (Chlamydophila pneumoniae).